The sequence spans 156 residues: Small ribosomal subunit protein uS7 (156 aa).

This sequence belongs to the universal ribosomal protein uS7 family. As to quaternary structure, part of the 30S ribosomal subunit. Contacts proteins S9 and S11.

Functionally, one of the primary rRNA binding proteins, it binds directly to 16S rRNA where it nucleates assembly of the head domain of the 30S subunit. Is located at the subunit interface close to the decoding center, probably blocks exit of the E-site tRNA. This chain is Small ribosomal subunit protein uS7, found in Symbiobacterium thermophilum (strain DSM 24528 / JCM 14929 / IAM 14863 / T).